Here is a 113-residue protein sequence, read N- to C-terminus: Large ribosomal subunit protein bL19 (113 aa).

The protein belongs to the bacterial ribosomal protein bL19 family.

Its function is as follows. This protein is located at the 30S-50S ribosomal subunit interface and may play a role in the structure and function of the aminoacyl-tRNA binding site. This Mycobacteroides abscessus (strain ATCC 19977 / DSM 44196 / CCUG 20993 / CIP 104536 / JCM 13569 / NCTC 13031 / TMC 1543 / L948) (Mycobacterium abscessus) protein is Large ribosomal subunit protein bL19.